The primary structure comprises 280 residues: Fructose-1,6-bisphosphatase class 1 (280 aa).

The Mg(2+) site is built by Glu64, Asp83, Leu85, and Asp86. Residues 86-89 (DGSS), Tyr189, and Lys220 contribute to the substrate site. Residue Glu226 participates in Mg(2+) binding.

This sequence belongs to the FBPase class 1 family. Homotetramer. It depends on Mg(2+) as a cofactor.

The protein resides in the cytoplasm. It carries out the reaction beta-D-fructose 1,6-bisphosphate + H2O = beta-D-fructose 6-phosphate + phosphate. It functions in the pathway carbohydrate biosynthesis; gluconeogenesis. In Campylobacter jejuni (strain RM1221), this protein is Fructose-1,6-bisphosphatase class 1.